The chain runs to 320 residues: Cytochrome f (320 aa).

The signal sequence occupies residues 1-35; it reads MQTRNTFSWIREEITRSISVSLMIYIITWASISSA. Y36, C56, C59, and H60 together coordinate heme. A helical transmembrane segment spans residues 286 to 305; the sequence is VQGLLFFLGSVVLAQIFLVL.

This sequence belongs to the cytochrome f family. As to quaternary structure, the 4 large subunits of the cytochrome b6-f complex are cytochrome b6, subunit IV (17 kDa polypeptide, petD), cytochrome f and the Rieske protein, while the 4 small subunits are PetG, PetL, PetM and PetN. The complex functions as a dimer. Heme serves as cofactor. In terms of processing, purified from leaves as a water-soluble monomeric protein with a mass of 28.16 kDa, cleavage occurs after Gln-287 and separates the heme-binding from the membrane.

It localises to the plastid. The protein resides in the chloroplast thylakoid membrane. Functionally, component of the cytochrome b6-f complex, which mediates electron transfer between photosystem II (PSII) and photosystem I (PSI), cyclic electron flow around PSI, and state transitions. This Brassica rapa subsp. rapa (Turnip) protein is Cytochrome f (petA).